A 134-amino-acid chain; its full sequence is UPF0412 protein YaaI (134 aa).

Positions 1–23 (MKSVITISASLAISLMLCCTAQA) are cleaved as a signal peptide.

It belongs to the UPF0412 family.

This chain is UPF0412 protein YaaI, found in Escherichia coli O127:H6 (strain E2348/69 / EPEC).